The chain runs to 509 residues: Cytochrome P450 monooxygenase ORF9 (509 aa).

A run of 2 helical transmembrane segments spans residues 20-40 (IYVL…GLIV) and 309-329 (LIIA…YYLL). N-linked (GlcNAc...) asparagine glycosylation occurs at asparagine 353. Cysteine 448 is a heme binding site.

This sequence belongs to the cytochrome P450 family. Requires heme as cofactor.

The protein localises to the membrane. It participates in sesquiterpene biosynthesis. Cytochrome P450 monooxygenase; part of the gene cluster that mediates the biosynthesis of PR-toxin, a bicyclic sesquiterpene belonging to the eremophilane class and acting as a mycotoxin. The first step of the pathway is catalyzed by the aristolochene synthase which performs the cyclization of trans,trans-farnesyl diphosphate (FPP) to the bicyclic sesquiterpene aristolochene. Following the formation of aristolochene, the non-oxygenated aristolochene is converted to the trioxygenated intermediate eremofortin B, via 7-epi-neopetasone. This conversion appears to involve three enzymes, a hydroxysterol oxidase-like enzyme, the quinone-oxidase prx3 that forms the quinone-type-structure in the bicyclic nucleus of aristolochene with the C8-oxo group and the C-3 hydroxyl group, and the P450 monooxygenase ORF6 that introduces the epoxide at the double bond between carbons 1 and 2. No monoxy or dioxy-intermediates have been reported to be released to the broth, so these three early oxidative reactions may be coupled together. Eremofortin B is further oxidized by another P450 monooxygenase, that introduces a second epoxide between carbons 7 and 11 prior to acetylation to eremofortin A by the acetyltransferase ORF8. The second epoxidation may be performed by a second P450 monooxygenase. After the acetylation step, eremofortin A is converted to eremofortin C and then to PR-toxin. First the conversion of eremofortin A to eremofortin C proceeds by oxidation of the side chain of the molecule at C-12 and is catalyzed by the short-chain oxidoreductase prx1. The cytochrome P450 monooxygenase ORF6 is probably also involved in this step. The primary alcohol formed at C-12 is finally oxidized by the short-chain alcohol dehydrogenase prx4 that forms PR-toxin. This is Cytochrome P450 monooxygenase ORF9 from Penicillium roqueforti (strain FM164).